Reading from the N-terminus, the 344-residue chain is Phosphate acyltransferase (344 aa).

Belongs to the PlsX family. Homodimer. Probably interacts with PlsY.

It is found in the cytoplasm. It carries out the reaction a fatty acyl-[ACP] + phosphate = an acyl phosphate + holo-[ACP]. The protein operates within lipid metabolism; phospholipid metabolism. Its function is as follows. Catalyzes the reversible formation of acyl-phosphate (acyl-PO(4)) from acyl-[acyl-carrier-protein] (acyl-ACP). This enzyme utilizes acyl-ACP as fatty acyl donor, but not acyl-CoA. This is Phosphate acyltransferase from Blochmanniella floridana.